Consider the following 581-residue polypeptide: Prolactin receptor (581 aa).

An N-terminal signal peptide occupies residues 1–24 (MKENAASRVLFILLLFLFASLLNG). The Extracellular segment spans residues 25–237 (QSPPEKPKLI…NDFPVKDTSM (213 aa)). 2 Fibronectin type-III domains span residues 27–127 (PPEK…IVEP) and 129–229 (PPVN…IPND). C36 and C46 are disulfide-bonded. A glycan (N-linked (GlcNAc...) asparagine) is linked at N59. The cysteines at positions 75 and 86 are disulfide-linked. An N-linked (GlcNAc...) asparagine glycan is attached at N132. Residues D211 and H212 each coordinate Zn(2+). Positions 215-219 (WSEWS) match the WSXWS motif motif. A helical transmembrane segment spans residues 238 to 258 (WIFVGVLSAVICLIMVWAVAL). The Cytoplasmic segment spans residues 259–581 (KGYSMVTCIL…SAKKAPPALP (323 aa)). The Box 1 motif motif lies at 267-275 (ILPPVPGPK). Composition is skewed to basic and acidic residues over residues 323-349 (QHLMPHPSKEHMEQGVKPMHLDPDTDS) and 375-388 (HIPEGPEKLEDPET). 2 disordered regions span residues 323–388 (QHLM…DPET) and 462–492 (FKPSKTIETGGEGKAAKQSESEGYSSEPDQD).

Belongs to the type I cytokine receptor family. Type 1 subfamily. As to quaternary structure, interacts with SMARCA1. Interacts with NEK3 and VAV2 and this interaction is prolactin-dependent. In terms of tissue distribution, expressed in all tissues examined; liver, pituitary, adrenal gland, ovary and fetal liver.

The protein localises to the membrane. Its function is as follows. This is a receptor for the anterior pituitary hormone prolactin. This chain is Prolactin receptor (PRLR), found in Ovis aries (Sheep).